We begin with the raw amino-acid sequence, 1133 residues long: Protein TOPLESS-RELATED PROTEIN 2 (1133 aa).

The region spanning L4–F36 is the LisH domain. Residues F34 to K92 enclose the CTLH domain. 12 WD repeats span residues N344–H384, A451–T492, G495–D536, A539–T582, F586–T625, G630–R669, A771–N810, N838–T876, A879–K919, G922–S961, R970–S1011, and A1015–R1054. Residues D1102 to V1133 form a disordered region.

In terms of assembly, tetramer. Interacts with D53, probably via the EAR motifs. Binds to AP2-1/TOE1, AP2-3/SNB and AP2-2/IDS1. Interacts with WOX1. Interacts with MOF1. As to expression, expressed in stems and panicles. Detected in roots, seeds, leaves and sheath. Expressed in the meristem and lateral organ primordia.

Its subcellular location is the nucleus. Its function is as follows. Transcriptional corepressor involved in branch formation regulation, presumably by suppressing primary branch formation and promoting secondary branch formation. Required for the cell elongation in the first internode and pollen development. Probable downstream regulator of strigolactones signaling important in axillary meristem maintenance. Acts in auxin signaling and is associated with the regulation of histone deacetylation. Essential for the function of miR172 microRNA and its target genes in regulating panicle development. The sequence is that of Protein TOPLESS-RELATED PROTEIN 2 from Oryza sativa subsp. japonica (Rice).